The primary structure comprises 776 residues: V-set and immunoglobulin domain-containing protein 10-like 2 (776 aa).

A signal peptide spans Met-1–Gly-28. Ig-like domains lie at Pro-32–Met-140, Pro-150–Asp-234, Pro-242–Gln-324, Pro-399–Glu-498, and Pro-500–Glu-592. 5 disulfides stabilise this stretch: Cys-56–Cys-122, Cys-169–Cys-217, Cys-268–Cys-308, Cys-435–Cys-480, and Cys-521–Cys-576. Positions Thr-608–Phe-708 constitute a Fibronectin type-III domain. Asn-611 and Asn-637 each carry an N-linked (GlcNAc...) asparagine glycan. A helical transmembrane segment spans residues Ala-713–Phe-733.

It localises to the membrane. The polypeptide is V-set and immunoglobulin domain-containing protein 10-like 2 (Mus musculus (Mouse)).